Here is a 424-residue protein sequence, read N- to C-terminus: Enolase (424 aa).

Residue Q165 participates in (2R)-2-phosphoglycerate binding. E207 (proton donor) is an active-site residue. Residues D244, E283, and D310 each coordinate Mg(2+). (2R)-2-phosphoglycerate-binding residues include K335, R364, S365, and K386. K335 acts as the Proton acceptor in catalysis.

This sequence belongs to the enolase family. Mg(2+) serves as cofactor.

Its subcellular location is the cytoplasm. It localises to the secreted. It is found in the cell surface. The catalysed reaction is (2R)-2-phosphoglycerate = phosphoenolpyruvate + H2O. It functions in the pathway carbohydrate degradation; glycolysis; pyruvate from D-glyceraldehyde 3-phosphate: step 4/5. Its function is as follows. Catalyzes the reversible conversion of 2-phosphoglycerate (2-PG) into phosphoenolpyruvate (PEP). It is essential for the degradation of carbohydrates via glycolysis. The chain is Enolase from Chlamydia caviae (strain ATCC VR-813 / DSM 19441 / 03DC25 / GPIC) (Chlamydophila caviae).